The sequence spans 67 residues: DNA-directed RNA polymerase subunit omega (67 aa).

It belongs to the RNA polymerase subunit omega family. The RNAP catalytic core consists of 2 alpha, 1 beta, 1 beta' and 1 omega subunit. When a sigma factor is associated with the core the holoenzyme is formed, which can initiate transcription.

The catalysed reaction is RNA(n) + a ribonucleoside 5'-triphosphate = RNA(n+1) + diphosphate. Promotes RNA polymerase assembly. Latches the N- and C-terminal regions of the beta' subunit thereby facilitating its interaction with the beta and alpha subunits. This Dictyoglomus turgidum (strain DSM 6724 / Z-1310) protein is DNA-directed RNA polymerase subunit omega.